Consider the following 241-residue polypeptide: Platelet-derived growth factor subunit B (241 aa).

A signal peptide spans 1–20 (MNRCWALFLSLCCYLRLVSA). The propeptide at 21–81 (EGDPIPEELY…ELESLSRGRR (61 aa)) is removed in mature form. The N-linked (GlcNAc...) asparagine glycan is linked to N63. 3 disulfide bridges follow: C97–C141, C130–C178, and C134–C180. The propeptide at 191–241 (TPGSSQEQRAARTPQTRVTIRTVRVRRPPKGKHRKFKHTHDKTALKETLGA) is removed in mature form. Positions 217-230 (RPPKGKHRKFKHTH) are enriched in basic residues. Positions 217-241 (RPPKGKHRKFKHTHDKTALKETLGA) are disordered.

It belongs to the PDGF/VEGF growth factor family. Antiparallel homodimer; disulfide-linked. Antiparallel heterodimer with PDGFA; disulfide-linked. The PDGFB homodimer interacts with PDGFRA and PDGFRB homodimers, and with heterodimers formed by PDGFRA and PDGFRB. The heterodimer composed of PDGFA and PDGFB interacts with PDGFRB homodimers, and with heterodimers formed by PDGFRA and PDGFRB. Interacts with XLKD1. Interacts with LRP1. Interacts with SORL1 (via the N-terminal ectodomain). Interacts with CD82; this interaction inhibits PDGFB-mediated signaling pathway.

Its subcellular location is the secreted. Functionally, growth factor that plays an essential role in the regulation of embryonic development, cell proliferation, cell migration, survival and chemotaxis. Potent mitogen for cells of mesenchymal origin. Required for normal proliferation and recruitment of pericytes and vascular smooth muscle cells in the central nervous system, skin, lung, heart and placenta. Required for normal blood vessel development, and for normal development of kidney glomeruli. Plays an important role in wound healing. Signaling is modulated by the formation of heterodimers with PDGFA. This chain is Platelet-derived growth factor subunit B (PDGFB), found in Ovis aries (Sheep).